Consider the following 215-residue polypeptide: Orotate phosphoribosyltransferase (215 aa).

K26 serves as a coordination point for 5-phospho-alpha-D-ribose 1-diphosphate. 34–35 (FF) contributes to the orotate binding site. 5-phospho-alpha-D-ribose 1-diphosphate-binding positions include 72–73 (YK), R99, K100, K103, H105, and 124–132 (DDVITAGTA). Orotate is bound by residues T128 and R156.

Belongs to the purine/pyrimidine phosphoribosyltransferase family. PyrE subfamily. In terms of assembly, homodimer. The cofactor is Mg(2+).

It carries out the reaction orotidine 5'-phosphate + diphosphate = orotate + 5-phospho-alpha-D-ribose 1-diphosphate. The protein operates within pyrimidine metabolism; UMP biosynthesis via de novo pathway; UMP from orotate: step 1/2. In terms of biological role, catalyzes the transfer of a ribosyl phosphate group from 5-phosphoribose 1-diphosphate to orotate, leading to the formation of orotidine monophosphate (OMP). This is Orotate phosphoribosyltransferase from Yersinia pseudotuberculosis serotype O:1b (strain IP 31758).